The sequence spans 89 residues: Small ribosomal subunit protein uS15 (89 aa).

Belongs to the universal ribosomal protein uS15 family. In terms of assembly, part of the 30S ribosomal subunit. Forms a bridge to the 50S subunit in the 70S ribosome, contacting the 23S rRNA.

Its function is as follows. One of the primary rRNA binding proteins, it binds directly to 16S rRNA where it helps nucleate assembly of the platform of the 30S subunit by binding and bridging several RNA helices of the 16S rRNA. Functionally, forms an intersubunit bridge (bridge B4) with the 23S rRNA of the 50S subunit in the ribosome. This chain is Small ribosomal subunit protein uS15, found in Prochlorococcus marinus (strain MIT 9215).